The following is a 59-amino-acid chain: Photosystem II reaction center protein K (59 aa).

The propeptide occupies Met-1 to Ala-22. A helical membrane pass occupies residues Met-38–Phe-58.

Belongs to the PsbK family. In terms of assembly, PSII is composed of 1 copy each of membrane proteins PsbA, PsbB, PsbC, PsbD, PsbE, PsbF, PsbH, PsbI, PsbJ, PsbK, PsbL, PsbM, PsbT, PsbX, PsbY, PsbZ, Psb30/Ycf12, at least 3 peripheral proteins of the oxygen-evolving complex and a large number of cofactors. It forms dimeric complexes.

The protein localises to the plastid. Its subcellular location is the chloroplast thylakoid membrane. In terms of biological role, one of the components of the core complex of photosystem II (PSII). PSII is a light-driven water:plastoquinone oxidoreductase that uses light energy to abstract electrons from H(2)O, generating O(2) and a proton gradient subsequently used for ATP formation. It consists of a core antenna complex that captures photons, and an electron transfer chain that converts photonic excitation into a charge separation. The polypeptide is Photosystem II reaction center protein K (Piper cenocladum (Ant piper)).